Reading from the N-terminus, the 1224-residue chain is DNA-directed RNA polymerase subunit beta'' (1224 aa).

4 residues coordinate Zn(2+): Cys223, Cys297, Cys304, and Cys307.

This sequence belongs to the RNA polymerase beta' chain family. RpoC2 subfamily. In plastids the minimal PEP RNA polymerase catalytic core is composed of four subunits: alpha, beta, beta', and beta''. When a (nuclear-encoded) sigma factor is associated with the core the holoenzyme is formed, which can initiate transcription. It depends on Zn(2+) as a cofactor.

It is found in the plastid. The protein localises to the chloroplast. It catalyses the reaction RNA(n) + a ribonucleoside 5'-triphosphate = RNA(n+1) + diphosphate. In terms of biological role, DNA-dependent RNA polymerase catalyzes the transcription of DNA into RNA using the four ribonucleoside triphosphates as substrates. The protein is DNA-directed RNA polymerase subunit beta'' of Porphyra purpurea (Red seaweed).